The sequence spans 349 residues: Glycerol-3-phosphate dehydrogenase [NAD(P)+] (349 aa).

Residues Trp16, Arg36, and Lys110 each coordinate NADPH. Lys110, Gly138, and Thr140 together coordinate sn-glycerol 3-phosphate. Position 142 (Ala142) interacts with NADPH. 5 residues coordinate sn-glycerol 3-phosphate: Lys193, Asp246, Ser256, Arg257, and Asn258. The active-site Proton acceptor is the Lys193. Arg257 contacts NADPH. NADPH is bound by residues Val281 and Glu283.

This sequence belongs to the NAD-dependent glycerol-3-phosphate dehydrogenase family.

It localises to the cytoplasm. The enzyme catalyses sn-glycerol 3-phosphate + NAD(+) = dihydroxyacetone phosphate + NADH + H(+). The catalysed reaction is sn-glycerol 3-phosphate + NADP(+) = dihydroxyacetone phosphate + NADPH + H(+). It functions in the pathway membrane lipid metabolism; glycerophospholipid metabolism. Functionally, catalyzes the reduction of the glycolytic intermediate dihydroxyacetone phosphate (DHAP) to sn-glycerol 3-phosphate (G3P), the key precursor for phospholipid synthesis. The chain is Glycerol-3-phosphate dehydrogenase [NAD(P)+] from Rhodospirillum rubrum (strain ATCC 11170 / ATH 1.1.1 / DSM 467 / LMG 4362 / NCIMB 8255 / S1).